The following is a 303-amino-acid chain: UPF0282 protein PAE3680 (303 aa).

Belongs to the UPF0282 family.

The protein is UPF0282 protein PAE3680 of Pyrobaculum aerophilum (strain ATCC 51768 / DSM 7523 / JCM 9630 / CIP 104966 / NBRC 100827 / IM2).